Here is an 827-residue protein sequence, read N- to C-terminus: Sporozoite surface protein 2 (827 aa).

A signal peptide spans 1–22 (MKLLGNSKYIFVVLLLCISVFL). The VWFA domain maps to 43 to 228 (DIHILLDGSG…NMIKPFLTKV (186 aa)). Residues 235–281 (IAHCGKWEEWSECSTTCDEGRKIRRRQILHPGCVSEMTTPCKVRDCP) form the TSP type-1 domain. Disulfide bonds link Cys-238-Cys-267, Cys-247-Cys-275, and Cys-251-Cys-280. The segment at 278-761 (RDCPQIPIPP…NKNQSKSNNG (484 aa)) is disordered. A compositionally biased stretch (low complexity) spans 301 to 388 (EEPVNPNDPN…NNPNDPSNPN (88 aa)). Positions 306 to 392 (PNDPNDPNNP…DPSNPNNPNP (87 aa)) are 29 X 3 AA tandem repeats. Positions 392-407 (PKKRNPKRRNPNKPKP) are enriched in basic residues. The segment at 402–514 (PNKPKPNKPN…EPSNPNEPSN (113 aa)) is 20 tandem tetra-/hexapeptide repeats. Over residues 408–464 (NKPNPNKPNPNEPSNPNKPNPNEPSNPNKPNPNEPSNPNKPNPNEPSNPNKPNPNEP) the composition is skewed to pro residues. Residues 465-567 (LNPNEPSNPN…KEPSNPNEPS (103 aa)) show a composition bias toward low complexity. 2 repeat units span residues 603-613 (PEESNPKEPIN) and 614-624 (PEESNPKEPIN). The tract at residues 603-624 (PEESNPKEPINPEESNPKEPIN) is 2 X 11 AA tandem repeats. Residues 657–671 (KGNNIPSNLPENPSD) show a composition bias toward polar residues. Residues 709–724 (YKGHEERIPKPHRSND) are compositionally biased toward basic and acidic residues. Residues 764–787 (IAGGIIGGLAILGCAGVGYNFIAG) traverse the membrane as a helical segment.

Its subcellular location is the cell membrane. The sequence is that of Sporozoite surface protein 2 (SSP2) from Plasmodium yoelii yoelii.